Consider the following 306-residue polypeptide: UDP-3-O-acyl-N-acetylglucosamine deacetylase (306 aa).

Histidine 79, histidine 238, and aspartate 242 together coordinate Zn(2+). Histidine 265 acts as the Proton donor in catalysis.

It belongs to the LpxC family. The cofactor is Zn(2+).

It carries out the reaction a UDP-3-O-[(3R)-3-hydroxyacyl]-N-acetyl-alpha-D-glucosamine + H2O = a UDP-3-O-[(3R)-3-hydroxyacyl]-alpha-D-glucosamine + acetate. It participates in glycolipid biosynthesis; lipid IV(A) biosynthesis; lipid IV(A) from (3R)-3-hydroxytetradecanoyl-[acyl-carrier-protein] and UDP-N-acetyl-alpha-D-glucosamine: step 2/6. Catalyzes the hydrolysis of UDP-3-O-myristoyl-N-acetylglucosamine to form UDP-3-O-myristoylglucosamine and acetate, the committed step in lipid A biosynthesis. This Shewanella sp. (strain W3-18-1) protein is UDP-3-O-acyl-N-acetylglucosamine deacetylase.